The following is a 656-amino-acid chain: Nuclear pore complex protein Nup85 (656 aa).

Met1 carries the post-translational modification N-acetylmethionine. At Lys92 the chain carries N6-acetyllysine. Phosphoserine is present on Ser223.

The protein belongs to the nucleoporin Nup85 family. Component of the nuclear pore complex (NPC). Component of the NPC Nup107-160 subcomplex, consisting of at least NUP107, NUP98/Nup96, NUP160, NUP133, NUP85, NUP37, NUP43 and SEC13. Interacts with NUP160, NUP133 and SEC13. Interacts with NUP37, NUP107 and NUP43. Interacts with CCR2.

The protein localises to the nucleus. It is found in the nuclear pore complex. It localises to the chromosome. Its subcellular location is the centromere. The protein resides in the kinetochore. The protein localises to the cytoplasm. It is found in the cytoskeleton. It localises to the spindle. Its subcellular location is the nucleus membrane. Essential component of the nuclear pore complex (NPC) that seems to be required for NPC assembly and maintenance. As part of the NPC Nup107-160 subcomplex plays a role in RNA export and in tethering NUP96/Nup98 and NUP153 to the nucleus. The Nup107-160 complex seems to be required for spindle assembly during mitosis. NUP85 is required for membrane clustering of CCL2-activated CCR2. Seems to be involved in CCR2-mediated chemotaxis of monocytes and may link activated CCR2 to the phosphatidyl-inositol 3-kinase-Rac-lammellipodium protrusion cascade. Involved in nephrogenesis. In Homo sapiens (Human), this protein is Nuclear pore complex protein Nup85 (NUP85).